The sequence spans 385 residues: 8-amino-7-oxononanoate synthase (385 aa).

Arginine 21 provides a ligand contact to substrate. A pyridoxal 5'-phosphate-binding site is contributed by 108–109 (GF). Histidine 133 lines the substrate pocket. Pyridoxal 5'-phosphate-binding residues include serine 179, histidine 207, and threonine 233. N6-(pyridoxal phosphate)lysine is present on lysine 236. Residue threonine 352 coordinates substrate.

Belongs to the class-II pyridoxal-phosphate-dependent aminotransferase family. BioF subfamily. In terms of assembly, homodimer. Pyridoxal 5'-phosphate is required as a cofactor.

It carries out the reaction 6-carboxyhexanoyl-[ACP] + L-alanine + H(+) = (8S)-8-amino-7-oxononanoate + holo-[ACP] + CO2. It functions in the pathway cofactor biosynthesis; biotin biosynthesis. Its function is as follows. Catalyzes the decarboxylative condensation of pimeloyl-[acyl-carrier protein] and L-alanine to produce 8-amino-7-oxononanoate (AON), [acyl-carrier protein], and carbon dioxide. The chain is 8-amino-7-oxononanoate synthase from Salmonella choleraesuis (strain SC-B67).